Reading from the N-terminus, the 269-residue chain is 2-dehydro-3-deoxyphosphooctonate aldolase (269 aa).

This sequence belongs to the KdsA family.

It localises to the cytoplasm. The catalysed reaction is D-arabinose 5-phosphate + phosphoenolpyruvate + H2O = 3-deoxy-alpha-D-manno-2-octulosonate-8-phosphate + phosphate. The protein operates within carbohydrate biosynthesis; 3-deoxy-D-manno-octulosonate biosynthesis; 3-deoxy-D-manno-octulosonate from D-ribulose 5-phosphate: step 2/3. Its pathway is bacterial outer membrane biogenesis; lipopolysaccharide biosynthesis. The protein is 2-dehydro-3-deoxyphosphooctonate aldolase of Chlamydia felis (strain Fe/C-56) (Chlamydophila felis).